The sequence spans 1152 residues: ATP-dependent helicase/deoxyribonuclease subunit B (1152 aa).

In terms of domain architecture, UvrD-like helicase ATP-binding spans 1–338; that stretch reads MSIRFIYGRA…LVRDRNYRFR (338 aa). Residue 8–15 participates in ATP binding; the sequence is GRAGSGKS. A UvrD-like helicase C-terminal domain is found at 276–579; it reads PYRFKNSEEL…NVGDIARIKG (304 aa). Residues Cys-785, Cys-1106, Cys-1109, and Cys-1115 each contribute to the [4Fe-4S] cluster site.

Belongs to the helicase family. AddB/RexB type 1 subfamily. As to quaternary structure, heterodimer of AddA and AddB. Mg(2+) serves as cofactor. The cofactor is [4Fe-4S] cluster.

In terms of biological role, the heterodimer acts as both an ATP-dependent DNA helicase and an ATP-dependent, dual-direction single-stranded exonuclease. Recognizes the chi site generating a DNA molecule suitable for the initiation of homologous recombination. The AddB subunit has 5' -&gt; 3' nuclease activity but not helicase activity. In Clostridium botulinum (strain Alaska E43 / Type E3), this protein is ATP-dependent helicase/deoxyribonuclease subunit B.